An 894-amino-acid polypeptide reads, in one-letter code: Microsomal triglyceride transfer protein large subunit (894 aa).

The signal sequence occupies residues Met-1–Ser-18. The region spanning Leu-28–Ile-662 is the Vitellogenin domain. An intrachain disulfide couples Cys-174 to Cys-194.

As to quaternary structure, heterodimer; heterodimerizes with the protein disulfide isomerase (P4HB/PDI). Interacts with APOB. Interacts with PRAP1.

Its subcellular location is the endoplasmic reticulum. It is found in the golgi apparatus. It catalyses the reaction a 1,2-diacyl-sn-glycero-3-phosphocholine(in) = a 1,2-diacyl-sn-glycero-3-phosphocholine(out). The catalysed reaction is a 1,2-diacyl-sn-glycero-3-phosphoethanolamine(in) = a 1,2-diacyl-sn-glycero-3-phosphoethanolamine(out). The enzyme catalyses a cholesterol ester(in) = a cholesterol ester(out). It carries out the reaction a triacyl-sn-glycerol(in) = a triacyl-sn-glycerol(out). Catalyzes the transport of triglyceride, cholesteryl ester, and phospholipid between phospholipid surfaces. Required for the assembly and secretion of plasma lipoproteins that contain apolipoprotein B. May be involved in regulating cholesteryl ester biosynthesis in cells that produce lipoproteins. The chain is Microsomal triglyceride transfer protein large subunit (MTTP) from Sus scrofa (Pig).